A 603-amino-acid polypeptide reads, in one-letter code: Pyruvate decarboxylase 4 (603 aa).

Residues Asp-65 and His-152 each coordinate substrate. The tract at residues 430 to 512 (DSWFNCQKLK…FLINNGGYTI (83 aa)) is thiamine pyrophosphate binding. Mg(2+)-binding residues include Asp-480, Asn-507, and Gly-509. Substrate is bound at residue Glu-513.

Belongs to the TPP enzyme family. Homotetramer. It depends on a metal cation as a cofactor. Thiamine diphosphate is required as a cofactor. In terms of tissue distribution, expressed in shoots and at lowe levels in roots, flowers and siliques.

It catalyses the reaction a 2-oxocarboxylate + H(+) = an aldehyde + CO2. The chain is Pyruvate decarboxylase 4 (PDC4) from Arabidopsis thaliana (Mouse-ear cress).